Here is an 88-residue protein sequence, read N- to C-terminus: Small ribosomal subunit protein uS15 (88 aa).

The protein belongs to the universal ribosomal protein uS15 family. Part of the 30S ribosomal subunit. Forms a bridge to the 50S subunit in the 70S ribosome, contacting the 23S rRNA.

Its function is as follows. One of the primary rRNA binding proteins, it binds directly to 16S rRNA where it helps nucleate assembly of the platform of the 30S subunit by binding and bridging several RNA helices of the 16S rRNA. In terms of biological role, forms an intersubunit bridge (bridge B4) with the 23S rRNA of the 50S subunit in the ribosome. This is Small ribosomal subunit protein uS15 from Caldanaerobacter subterraneus subsp. tengcongensis (strain DSM 15242 / JCM 11007 / NBRC 100824 / MB4) (Thermoanaerobacter tengcongensis).